The following is a 186-amino-acid chain: Ribosome-recycling factor (186 aa).

It belongs to the RRF family.

Its subcellular location is the cytoplasm. Responsible for the release of ribosomes from messenger RNA at the termination of protein biosynthesis. May increase the efficiency of translation by recycling ribosomes from one round of translation to another. This Brucella abortus (strain S19) protein is Ribosome-recycling factor.